The primary structure comprises 72 residues: Large ribosomal subunit protein bL31 (72 aa).

Zn(2+)-binding residues include Cys-16, Cys-18, Cys-37, and Cys-40.

It belongs to the bacterial ribosomal protein bL31 family. Type A subfamily. In terms of assembly, part of the 50S ribosomal subunit. The cofactor is Zn(2+).

Its function is as follows. Binds the 23S rRNA. The sequence is that of Large ribosomal subunit protein bL31 from Buchnera aphidicola subsp. Acyrthosiphon pisum (strain APS) (Acyrthosiphon pisum symbiotic bacterium).